The sequence spans 110 residues: Ribonuclease P protein component 1 (110 aa).

Belongs to the eukaryotic/archaeal RNase P protein component 1 family. In terms of assembly, consists of a catalytic RNA component and at least 4-5 protein subunits.

The protein localises to the cytoplasm. It carries out the reaction Endonucleolytic cleavage of RNA, removing 5'-extranucleotides from tRNA precursor.. In terms of biological role, part of ribonuclease P, a protein complex that generates mature tRNA molecules by cleaving their 5'-ends. The polypeptide is Ribonuclease P protein component 1 (Aeropyrum pernix (strain ATCC 700893 / DSM 11879 / JCM 9820 / NBRC 100138 / K1)).